The sequence spans 221 residues: Pyridoxine/pyridoxamine 5'-phosphate oxidase (221 aa).

The interval 1 to 21 is disordered; the sequence is MDYSDPAELRESYDGAPLDPR. Substrate contacts are provided by residues 10-13 and lysine 68; that span reads RESY. Residues 63–68, 78–79, arginine 84, lysine 85, and glutamine 107 each bind FMN; these read RTVLLK and FT. Residues tyrosine 125, arginine 129, and serine 133 each coordinate substrate. FMN is bound by residues 143 to 144 and tryptophan 189; that span reads QS. Residue 195–197 participates in substrate binding; sequence RMH. Residue arginine 199 coordinates FMN.

This sequence belongs to the pyridoxamine 5'-phosphate oxidase family. In terms of assembly, homodimer. Requires FMN as cofactor.

It carries out the reaction pyridoxamine 5'-phosphate + O2 + H2O = pyridoxal 5'-phosphate + H2O2 + NH4(+). It catalyses the reaction pyridoxine 5'-phosphate + O2 = pyridoxal 5'-phosphate + H2O2. It functions in the pathway cofactor metabolism; pyridoxal 5'-phosphate salvage; pyridoxal 5'-phosphate from pyridoxamine 5'-phosphate: step 1/1. The protein operates within cofactor metabolism; pyridoxal 5'-phosphate salvage; pyridoxal 5'-phosphate from pyridoxine 5'-phosphate: step 1/1. In terms of biological role, catalyzes the oxidation of either pyridoxine 5'-phosphate (PNP) or pyridoxamine 5'-phosphate (PMP) into pyridoxal 5'-phosphate (PLP). This Thermobifida fusca (strain YX) protein is Pyridoxine/pyridoxamine 5'-phosphate oxidase.